A 358-amino-acid chain; its full sequence is Methylthioribose-1-phosphate isomerase (358 aa).

Residues 54-56, Arg96, and Gln205 contribute to the substrate site; that span reads RGA. Asp246 acts as the Proton donor in catalysis. 256–257 contributes to the substrate binding site; sequence NK.

This sequence belongs to the eIF-2B alpha/beta/delta subunits family. MtnA subfamily.

The enzyme catalyses 5-(methylsulfanyl)-alpha-D-ribose 1-phosphate = 5-(methylsulfanyl)-D-ribulose 1-phosphate. The protein operates within amino-acid biosynthesis; L-methionine biosynthesis via salvage pathway; L-methionine from S-methyl-5-thio-alpha-D-ribose 1-phosphate: step 1/6. Functionally, catalyzes the interconversion of methylthioribose-1-phosphate (MTR-1-P) into methylthioribulose-1-phosphate (MTRu-1-P). In Ectopseudomonas mendocina (strain ymp) (Pseudomonas mendocina), this protein is Methylthioribose-1-phosphate isomerase.